The sequence spans 59 residues: Small integral membrane protein 30 (59 aa).

The signal sequence occupies residues 1–24 (MTSVSTQLSLVLMSLLLVLPVVEA). Over 25–29 (VEAGD) the chain is Extracellular. Residues 30 to 50 (AIALLLGVVLSITGICACLGV) traverse the membrane as a helical segment. Residues 51–59 (YARKRNGQM) are Cytoplasmic-facing.

As to quaternary structure, interacts (via transmembrane domain) with antiviral protein MAVS (via transmembrane domain); the interaction disrupts MAVS interaction with RIGI and inhibits MAVS aggregation, resulting in the repression of type I interferon signaling and innate immune responses.

It localises to the endoplasmic reticulum membrane. It is found in the mitochondrion membrane. Functionally, negatively regulates antiviral innate immune responses. Disrupts the interaction of antiviral protein MAVS with innate immune receptor RIGI and inhibits MAVS aggregation, resulting in the repression of type I interferon signaling and innate immune responses. This Homo sapiens (Human) protein is Small integral membrane protein 30.